The primary structure comprises 122 residues: Ig heavy chain V region M511 (122 aa).

Positions 1-114 constitute an Ig-like domain; the sequence is EVKLVESGGG…SYWYFDVWGA (114 aa).

In Mus musculus (Mouse), this protein is Ig heavy chain V region M511.